The following is a 116-amino-acid chain: Beta-2-microglobulin (116 aa).

The signal sequence occupies residues 1–19; it reads MKFLLSFVVLAVFSASAFA. The region spanning 24 to 111 is the Ig-like C1-type domain; sequence PKIQVYSRNP…RHLKETKNIS (88 aa). An intrachain disulfide couples Cys-44 to Cys-99.

The protein belongs to the beta-2-microglobulin family. As to quaternary structure, heterodimer of an alpha chain and a beta chain. Beta-2-microglobulin is the beta-chain of major histocompatibility complex class I molecules.

It is found in the secreted. In terms of biological role, component of the class I major histocompatibility complex (MHC). Involved in the presentation of peptide antigens to the immune system. The chain is Beta-2-microglobulin (b2m) from Ictalurus punctatus (Channel catfish).